A 214-amino-acid chain; its full sequence is MTHETTTLISLKEAMKRVDNKLRALDTQFKELDVTKDNLTLRFEHHSKTLASQAAQDEIWTAALALGFTSMELNIVYSYVIEVLICLHTRMLQKLPDLVRSLPTLASVLRRKAKNKHVRLVWESVLQEYGLQERDVSALCTFFIVHGNKGEHYAANVRRMYIKDVSFMITNMVKNQALQDGLLRAVQIIEKGKQAQDPENSRAPLKELMPPVKD.

Residues 5-40 (TTTLISLKEAMKRVDNKLRALDTQFKELDVTKDNLT) are a coiled coil. The chain crosses the membrane as a helical span at residues 59 to 81 (IWTAALALGFTSMELNIVYSYVI). A disordered region spans residues 193–214 (KQAQDPENSRAPLKELMPPVKD).

The protein localises to the membrane. The sequence is that of Single-pass membrane and coiled-coil domain-containing protein 1 (Smco1) from Mus musculus (Mouse).